A 641-amino-acid polypeptide reads, in one-letter code: Single-strand DNA endonuclease 1 (641 aa).

The interval 1–90 (MGVKNLWDIL…SLKLATYRRR (90 aa)) is N-domain. The tract at residues 2–97 (GVKNLWDILE…RRRLGSISHA (96 aa)) is XPG-N domain. Residues Asp-30, Asp-76, Glu-144, Glu-146, Asp-165, Asp-167, and Asp-217 each coordinate Mg(2+). Residues 132-217 (MALGIPCLDG…ISLAVLLGSD (86 aa)) form an XPG-I domain region. 2 I-domain regions span residues 132 to 220 (MALG…DYSN) and 132 to 221 (MALG…YSNG). The interval 217–350 (DYSNGVNGFG…ILPKIAEREL (134 aa)) is 5'-3' exonuclease domain. Disordered regions lie at residues 428-448 (KGEEKKQKRRARPKKSGQAAV) and 572-615 (VGSH…RVHH). Residues 580-590 (DGGGGGGGGVA) show a composition bias toward gly residues.

The protein belongs to the XPG/RAD2 endonuclease family. GEN subfamily. The cofactor is Mg(2+). As to expression, highly expressed in shoot apical meristem (SAM) and young leaves. Expressed in roots, flag leaf and panicles.

The protein resides in the nucleus. In terms of biological role, single-stranded DNA endonuclease activity in vitro. May not be active as double-stranded DNA endonuclease. Endonuclease which cleaves flap structures at the junction between single-stranded DNA and double-stranded DNA with a specific cleavage site in the 5' overhang strand exactly one nucleotide 3' of the branch point. Structure- and sequence-specific nuclease that resolves holliday junctions (HJs) by symmetrically oriented incisions in two opposing strands near the junction point, thus leading to ligatable products; HJs are physical links between homologous DNA molecules that arise as central intermediary structures during homologous recombination and repair in meiotic and somatic cells. Probably involved in the resolution of toxic replication structures to ensure genome stability, and to maintain telomere integrity and replication. This is Single-strand DNA endonuclease 1 from Oryza sativa subsp. japonica (Rice).